A 205-amino-acid polypeptide reads, in one-letter code: Thymidylate kinase (205 aa).

Residue 11–18 (GVEGSGKS) participates in ATP binding.

The protein belongs to the thymidylate kinase family.

The enzyme catalyses dTMP + ATP = dTDP + ADP. Functionally, phosphorylation of dTMP to form dTDP in both de novo and salvage pathways of dTTP synthesis. The protein is Thymidylate kinase of Ruthia magnifica subsp. Calyptogena magnifica.